Reading from the N-terminus, the 484-residue chain is L-amino-acid oxidase (484 aa).

Cys8 and Cys171 are disulfide-bonded. Residues 41-42 (MS), 61-62 (EA), and Arg69 contribute to the FAD site. Zn(2+) is bound at residue His73. 85 to 88 (GPMR) contacts FAD. Arg88 provides a ligand contact to substrate. The N-linked (GlcNAc...) asparagine glycan is linked to Asn170. His221 is a binding site for substrate. Residue Val259 participates in FAD binding. Residue Glu277 coordinates Zn(2+). The cysteines at positions 329 and 410 are disulfide-linked. Tyr370 provides a ligand contact to substrate. FAD-binding positions include Glu455 and 462 to 467 (GWIDST). 462 to 463 (GW) contacts substrate.

It belongs to the flavin monoamine oxidase family. FIG1 subfamily. In terms of assembly, homodimer; non-covalently linked. Requires FAD as cofactor. In terms of tissue distribution, expressed by the venom gland.

It localises to the secreted. The catalysed reaction is an L-alpha-amino acid + O2 + H2O = a 2-oxocarboxylate + H2O2 + NH4(+). Catalyzes an oxidative deamination of predominantly hydrophobic and aromatic L-amino acids, thus producing hydrogen peroxide that may contribute to the diverse toxic effects of this enzyme. Exhibits diverse biological activities, such as hemorrhage, hemolysis, edema, apoptosis of vascular endothelial cells or tumor cell lines, antibacterial and antiparasitic activities, as well as regulation of platelet aggregation. Effects of snake L-amino oxidases on platelets are controversial, since they either induce aggregation or inhibit agonist-induced aggregation. These different effects are probably due to different experimental conditions. This is L-amino-acid oxidase from Vipera ammodytes ammodytes (Western sand viper).